Reading from the N-terminus, the 215-residue chain is Large ribosomal subunit protein uL3 (215 aa).

Residues 134 to 166 (MAHGSKNHRAPGSIGAGTTPGRVFPGKRMPGRM) are disordered.

It belongs to the universal ribosomal protein uL3 family. In terms of assembly, part of the 50S ribosomal subunit. Forms a cluster with proteins L14 and L19.

Its function is as follows. One of the primary rRNA binding proteins, it binds directly near the 3'-end of the 23S rRNA, where it nucleates assembly of the 50S subunit. This chain is Large ribosomal subunit protein uL3, found in Gloeobacter violaceus (strain ATCC 29082 / PCC 7421).